The chain runs to 397 residues: Probable inactive purple acid phosphatase 28 (397 aa).

A signal peptide spans 1 to 30; that stretch reads MNCSIGNWKHTVLYLTLIVSLLYFIESLIS. 2 N-linked (GlcNAc...) asparagine glycosylation sites follow: Asn-91 and Asn-209. The Zn(2+) site is built by His-266 and His-314. 314-316 serves as a coordination point for substrate; the sequence is HDH. Residue His-316 coordinates Fe cation.

This sequence belongs to the metallophosphoesterase superfamily. Purple acid phosphatase family. In terms of assembly, homodimer. Fe cation is required as a cofactor. It depends on Zn(2+) as a cofactor. Expressed in roots, stems, leaves, flowers and siliques.

It localises to the secreted. This is Probable inactive purple acid phosphatase 28 (PAP28) from Arabidopsis thaliana (Mouse-ear cress).